A 311-amino-acid chain; its full sequence is Taste receptor type 2 member 40 (311 aa).

Residues 1-9 (MSSLFSSFC) are Extracellular-facing. The chain crosses the membrane as a helical span at residues 10–30 (LVIAIFESVVGLLGNGTIVAV). The Cytoplasmic portion of the chain corresponds to 31-55 (SSTSCIRSKILSSYDVIVIFLSLSR). A helical membrane pass occupies residues 56–76 (FFLQLWMILDFLLIFFCQPSY). The Extracellular segment spans residues 77–87 (YEENLFVTFKT). The chain crosses the membrane as a helical span at residues 88 to 108 (VFIFLNSYSFWFAAWLSVFYC). Residues 109-128 (VKVASFTQSFLSWLKQRIAS) lie on the Cytoplasmic side of the membrane. The helical transmembrane segment at 129 to 149 (LIPWMLITSSLFSFATSLPFF) threads the bilayer. Residues 150–178 (WDSYNAHSNFTTPLTMTNSSKRITTRKTN) are Extracellular-facing. A helical transmembrane segment spans residues 179-199 (LIFLILLCNVGIALPSIMLVF). Topologically, residues 200–235 (SSILLIRSLWRHTRQMQNNATGFRDPSLEALIGAIK) are cytoplasmic. The chain crosses the membrane as a helical span at residues 236–256 (TVFSFLLLYITNFIALILILS). Residues 257–266 (DTFVPLSTEE) are Extracellular-facing. The helical transmembrane segment at 267–287 (AICVVVVAACPAGQSMVLIWS) threads the bilayer. The Cytoplasmic segment spans residues 288–311 (NPRFRELLSSILHYVNSCVRARCS).

The protein belongs to the G-protein coupled receptor T2R family. In terms of tissue distribution, expressed in the oral cavity, as well as in the gastrointestinal tract, including in the upper palate, tongue, proventriculus, ventriculus, duodenum, jejunum, ileum, cecum and colon.

It is found in the cell membrane. In terms of biological role, bitter taste receptor. Binds quinine, dextromethorphan, diphenhydramine, diphenidol, chlorpheniramine, diphenidol, chloramphenicol, chloroquine and coumarin, this latter being a weak agonist, as well as epiquinidine, ethylhydrocupreine and quinidine. The protein is Taste receptor type 2 member 40 (TAS2R40) of Gallus gallus (Chicken).